The primary structure comprises 454 residues: MNVSVVILAAGAGTRMKSHIPKVLHKICGKEMLFYSIDEALKISDDVHIVLFHQENVIKERLLCAYKQAYADGALHFHLQDHAHYPGTGGALMQGQNAGANAKKPFCYQYDEILILNGDMPLVCSQTLKSLCQNKAQIVMSVLHLQNPDGYGRVVMESGVVQRIIEQKDAKESELLIKDVNAGVYKIHKSILDLYLPQVGNANNQQEFYLTDVVFYAKENGIEIAALEVKEEEFMGVNSKIQLACAQEIMLQRLREKAMEQGVIMNLPHTIYLESNVTFSGECIIEQGVQILGDSHISDSHIKAHSVIEQSIIESSDVGPLAHIRPKSHIKNTHIGNFVETKSSTLRGVKVGHLSYLGDCEIDEGSNIGAGVITCNYDGKAKHKTTIGKSVFVGSDVQLIAPLNIESNVLIGAGSTITKDIEYGDLALSRVAQQNIKDGFFKFFSDKNEEKKEQ.

The segment at 1-240 is pyrophosphorylase; sequence MNVSVVILAA…EEEFMGVNSK (240 aa). UDP-N-acetyl-alpha-D-glucosamine-binding positions include 8-11, Lys-22, and 87-88; these read LAAG and GT. Mg(2+) is bound at residue Asp-119. Gly-152, Glu-166, Asn-181, and Asn-238 together coordinate UDP-N-acetyl-alpha-D-glucosamine. Asn-238 is a Mg(2+) binding site. The linker stretch occupies residues 241–261; it reads IQLACAQEIMLQRLREKAMEQ. Residues 262–454 are N-acetyltransferase; the sequence is GVIMNLPHTI…SDKNEEKKEQ (193 aa). Positions 325 and 342 each coordinate UDP-N-acetyl-alpha-D-glucosamine. His-353 functions as the Proton acceptor in the catalytic mechanism. Residues Tyr-356 and Asn-367 each coordinate UDP-N-acetyl-alpha-D-glucosamine. Residues Ala-370, 376–377, Ser-395, Ala-413, and Arg-430 each bind acetyl-CoA; that span reads NY.

This sequence in the N-terminal section; belongs to the N-acetylglucosamine-1-phosphate uridyltransferase family. In the C-terminal section; belongs to the transferase hexapeptide repeat family. In terms of assembly, homotrimer. Mg(2+) is required as a cofactor.

The protein resides in the cytoplasm. It catalyses the reaction alpha-D-glucosamine 1-phosphate + acetyl-CoA = N-acetyl-alpha-D-glucosamine 1-phosphate + CoA + H(+). It carries out the reaction N-acetyl-alpha-D-glucosamine 1-phosphate + UTP + H(+) = UDP-N-acetyl-alpha-D-glucosamine + diphosphate. It participates in nucleotide-sugar biosynthesis; UDP-N-acetyl-alpha-D-glucosamine biosynthesis; N-acetyl-alpha-D-glucosamine 1-phosphate from alpha-D-glucosamine 6-phosphate (route II): step 2/2. Its pathway is nucleotide-sugar biosynthesis; UDP-N-acetyl-alpha-D-glucosamine biosynthesis; UDP-N-acetyl-alpha-D-glucosamine from N-acetyl-alpha-D-glucosamine 1-phosphate: step 1/1. The protein operates within bacterial outer membrane biogenesis; LPS lipid A biosynthesis. Its function is as follows. Catalyzes the last two sequential reactions in the de novo biosynthetic pathway for UDP-N-acetylglucosamine (UDP-GlcNAc). The C-terminal domain catalyzes the transfer of acetyl group from acetyl coenzyme A to glucosamine-1-phosphate (GlcN-1-P) to produce N-acetylglucosamine-1-phosphate (GlcNAc-1-P), which is converted into UDP-GlcNAc by the transfer of uridine 5-monophosphate (from uridine 5-triphosphate), a reaction catalyzed by the N-terminal domain. This is Bifunctional protein GlmU from Helicobacter hepaticus (strain ATCC 51449 / 3B1).